Reading from the N-terminus, the 188-residue chain is Transcription antitermination protein NusB (188 aa).

A disordered region spans residues 154 to 188 (RAANPGAVSGSDAPVAPWDDSEELPAEDEAEDSRP). A compositionally biased stretch (acidic residues) spans 172-188 (DDSEELPAEDEAEDSRP).

This sequence belongs to the NusB family.

Involved in transcription antitermination. Required for transcription of ribosomal RNA (rRNA) genes. Binds specifically to the boxA antiterminator sequence of the ribosomal RNA (rrn) operons. This chain is Transcription antitermination protein NusB, found in Corynebacterium efficiens (strain DSM 44549 / YS-314 / AJ 12310 / JCM 11189 / NBRC 100395).